We begin with the raw amino-acid sequence, 114 residues long: Ribonuclease P protein component (114 aa).

This sequence belongs to the RnpA family. As to quaternary structure, consists of a catalytic RNA component (M1 or rnpB) and a protein subunit.

The catalysed reaction is Endonucleolytic cleavage of RNA, removing 5'-extranucleotides from tRNA precursor.. Functionally, RNaseP catalyzes the removal of the 5'-leader sequence from pre-tRNA to produce the mature 5'-terminus. It can also cleave other RNA substrates such as 4.5S RNA. The protein component plays an auxiliary but essential role in vivo by binding to the 5'-leader sequence and broadening the substrate specificity of the ribozyme. The polypeptide is Ribonuclease P protein component (Borrelia duttonii (strain Ly)).